The primary structure comprises 133 residues: S-adenosylmethionine decarboxylase proenzyme (133 aa).

Ser63 (schiff-base intermediate with substrate; via pyruvic acid) is an active-site residue. At Ser63 the chain carries Pyruvic acid (Ser); by autocatalysis. Residue His68 is the Proton acceptor; for processing activity of the active site. Cys83 functions as the Proton donor; for catalytic activity in the catalytic mechanism.

Belongs to the prokaryotic AdoMetDC family. Type 1 subfamily. In terms of assembly, heterotetramer of two alpha and two beta chains arranged as a dimer of alpha/beta heterodimers. Pyruvate serves as cofactor. Post-translationally, is synthesized initially as an inactive proenzyme. Formation of the active enzyme involves a self-maturation process in which the active site pyruvoyl group is generated from an internal serine residue via an autocatalytic post-translational modification. Two non-identical subunits are generated from the proenzyme in this reaction, and the pyruvate is formed at the N-terminus of the alpha chain, which is derived from the carboxyl end of the proenzyme. The post-translation cleavage follows an unusual pathway, termed non-hydrolytic serinolysis, in which the side chain hydroxyl group of the serine supplies its oxygen atom to form the C-terminus of the beta chain, while the remainder of the serine residue undergoes an oxidative deamination to produce ammonia and the pyruvoyl group blocking the N-terminus of the alpha chain.

It carries out the reaction S-adenosyl-L-methionine + H(+) = S-adenosyl 3-(methylsulfanyl)propylamine + CO2. It functions in the pathway amine and polyamine biosynthesis; S-adenosylmethioninamine biosynthesis; S-adenosylmethioninamine from S-adenosyl-L-methionine: step 1/1. Functionally, catalyzes the decarboxylation of S-adenosylmethionine to S-adenosylmethioninamine (dcAdoMet), the propylamine donor required for the synthesis of the polyamines spermine and spermidine from the diamine putrescine. This chain is S-adenosylmethionine decarboxylase proenzyme, found in Acidithiobacillus ferrooxidans (strain ATCC 23270 / DSM 14882 / CIP 104768 / NCIMB 8455) (Ferrobacillus ferrooxidans (strain ATCC 23270)).